The chain runs to 203 residues: Ribonuclease HII (203 aa).

Residues 15–201 (LLVAGLDEAG…VAQAPLRFPE (187 aa)) enclose the RNase H type-2 domain. A divalent metal cation contacts are provided by Asp-21, Glu-22, and Asp-111.

It belongs to the RNase HII family. Mn(2+) is required as a cofactor. The cofactor is Mg(2+).

The protein resides in the cytoplasm. The catalysed reaction is Endonucleolytic cleavage to 5'-phosphomonoester.. Functionally, endonuclease that specifically degrades the RNA of RNA-DNA hybrids. This chain is Ribonuclease HII, found in Thermus thermophilus (strain ATCC 27634 / DSM 579 / HB8).